We begin with the raw amino-acid sequence, 261 residues long: tRNA U34 carboxymethyltransferase (261 aa).

Residues K25, W39, K44, G63, 114 to 115 (VE), Y135, and R250 each bind carboxy-S-adenosyl-L-methionine.

Belongs to the class I-like SAM-binding methyltransferase superfamily. CmoB family. Homotetramer.

The enzyme catalyses carboxy-S-adenosyl-L-methionine + 5-hydroxyuridine(34) in tRNA = 5-carboxymethoxyuridine(34) in tRNA + S-adenosyl-L-homocysteine + H(+). Its function is as follows. Catalyzes carboxymethyl transfer from carboxy-S-adenosyl-L-methionine (Cx-SAM) to 5-hydroxyuridine (ho5U) to form 5-carboxymethoxyuridine (cmo5U) at position 34 in tRNAs. This Helicobacter pylori (strain P12) protein is tRNA U34 carboxymethyltransferase.